The chain runs to 135 residues: Ribosomal RNA large subunit methyltransferase H (135 aa).

S-adenosyl-L-methionine contacts are provided by residues L52, G83, and 102–107; that span reads LSSLTL.

This sequence belongs to the RNA methyltransferase RlmH family. Homodimer.

The protein localises to the cytoplasm. The catalysed reaction is pseudouridine(1915) in 23S rRNA + S-adenosyl-L-methionine = N(3)-methylpseudouridine(1915) in 23S rRNA + S-adenosyl-L-homocysteine + H(+). Specifically methylates the pseudouridine at position 1915 (m3Psi1915) in 23S rRNA. This Polynucleobacter necessarius subsp. necessarius (strain STIR1) protein is Ribosomal RNA large subunit methyltransferase H.